The primary structure comprises 124 residues: Glycine cleavage system H protein (124 aa).

The 83-residue stretch at 24 to 106 (TYTMGITDHA…YDDGWLVKFK (83 aa)) folds into the Lipoyl-binding domain. K65 carries the post-translational modification N6-lipoyllysine.

It belongs to the GcvH family. The glycine cleavage system is composed of four proteins: P, T, L and H. (R)-lipoate serves as cofactor.

Functionally, the glycine cleavage system catalyzes the degradation of glycine. The H protein shuttles the methylamine group of glycine from the P protein to the T protein. This is Glycine cleavage system H protein from Ruthia magnifica subsp. Calyptogena magnifica.